Reading from the N-terminus, the 1824-residue chain is MASQNVVFAIDVDYRPEGTQNTTNAYQDHLKQWILRVLLSLGHRYGLEKVRWGYKFFNSRTVKSATLITRGSDFKELQEKVFSDFEEELHVKFTTEGKSPRSQEKSHKLKPSPACCVQNALKEILLDFQWDRPDLTSPTKVTLRPRRSSRSGRNIPLQDCDMLSVDKNVLFVVSECPRSKAELEDYLSMRREDSRHHKDINEQMLPKGLIDMLMQRNVVLHWADSGVFKADHVAKDYTGIETLMERLGLVGGQVVPMLSPCLPLMDQHPKMNSLLALGVDAFPIDSTNSYLHLSKRMQQQLFPPLGASFSWIADGTKRSCNVTLEPVSYRQRSLRAPVDVLLKGVLQSLDILSLSHSAIETWILQCPDAELGQEAFQHLKQLSTGGHAMLAEVSEGDVVCSAVLSVLSSCTAQITVLQPLLAQEGQLLPADLVSLDTTDISGDLPDVVSSVLSVMYDIMEEDDCSDHEKMPLVPDWANQELKQQSSSRSNGMVEGWFPLSDQSGISCHLMESMRLLHAAPEEKEKGEEYSDTQQEITSSLSEFYQSSTAGSSGSLRSKKRGTQCTPVRQKMKTMSRSLQMLNFARLNVKAQKTQGDSGSAGSGKGTEKGGKKSSGDRTKPGLLHFSSEEELLSHLGLTYQKAVENRTMSVPSQVQDLLSVVKSFLKSNTEASLLNLVQKHVLKSCQSIRQHYGNSSDDESKIRECQLQAVLRLELCKQTEQEDEEVVEQRVEDVADMLRNISRSKDAVYLSRFMQEEVLPLYMNSIPKVLADVYHSLGTQLPEALVAVLPSDFFSDESLAKDSVSVSLSSFSATQSNISSVGDHLEELRNRSAKKRRQSMITRHKSMTEAPQALRQIEMPRKSTRLAKPKLCVPIEKTAVEQPPLPKQPVQEVTKVRRNLFNQVTVSPSKKSKMPRSQSVSAVEGIKKRKRSDVDNDDRHTLLTKKVSETPLHKQVSSRLLHRQRTGRKSGESDVCIIEESPIKPAADLRRSPRIKSLTRRHSSVFYSSSQPRSRNLDRVVSSSQLSHSEGKGKFSVSSVRSPVRLLFGATQSPGRLRHTTVSSLEDQASKGLPLRCSSFENQNKTPQKLRSDALASAVGCRTPQSPRTPNRTVGDNGMALRGSPFQSPAAKSIVVETPMKSPLKGILKTPIKKSLLDCVSPNGAWLRSPGCKTPKKCVTWSPSPRKPVPENQVNVPDSPVFAKRHSPRLVTPGKNSSPEEKIVFKTPDKVPQRKSKTSPEIILRRLEIPVNIDPETCKSITRSGKIRTLSLPYKTSKGSDEFLPQSESGSFPFCNSPLKPNIQKTIQSPIPTHRMCTRSGNTPVKESCSPSSNSQGITGTSPSPRKSLSSAVAKSSPSPSFGPSRSGVGNQNNSSISNVEKHTDDDKIIVQNKANDEKAEEASSSDSQQFDCSEFSITTDDESIDISEAAVVKTQLVGGIKMNIAFSRKPSKSDVFEFEGKQTTSTGTPLTRSYGFRQTPDRRQREAEARLGYSSGKPKISTPRTRRTPACGKQSSPQPLTYEVEMEMQASGLPKLKLRRTDSFNAGDLPSSATKGMTSHLVHRNKTNLKAPQIDSPLVQSSRHPGCISPSLCSRATPAKGTPGKGVQTYICQSITPTHHPTSSQSPLASPLTPSPQSRGWPTPENLNSWPRKKRARIETCGNKEQVIKGVPLLEKTGVIEDPELEGIFRIQGVEELKESLSTPISQRKLGLRSSQVMDHQGSPEGMDWTETMAQMCDAKDSTKTEQFAWMGRKVDTPKVKKQVSASGIFALTQSPLLYKKSAVIKEATQFSGSKSELEISPLCQPRRRRTPSRTYSRKKLLD.

Disordered stretches follow at residues 542-572 (EFYQ…QKMK), 590-622 (AQKT…KPGL), 907-973 (SPSK…SGES), 1001-1035 (RHSS…KGKF), 1098-1117 (AVGC…VGDN), 1189-1221 (VPEN…SPEE), 1293-1388 (PFCN…DDDK), 1459-1518 (FEGK…QSSP), 1617-1650 (TPTH…NLNS), and 1803-1824 (PLCQ…KLLD). Residues 546–555 (SSTAGSSGSL) show a composition bias toward low complexity. Residues 562–572 (TQCTPVRQKMK) are compositionally biased toward polar residues. Residues 605–619 (GTEKGGKKSSGDRTK) show a composition bias toward basic and acidic residues. Polar residues predominate over residues 907–921 (SPSKKSKMPRSQSVS). A compositionally biased stretch (basic and acidic residues) spans 932-952 (SDVDNDDRHTLLTKKVSETPL). Composition is skewed to polar residues over residues 1005–1014 (VFYSSSQPRS) and 1103–1114 (TPQSPRTPNRTV). A compositionally biased stretch (polar residues) spans 1319-1345 (RSGNTPVKESCSPSSNSQGITGTSPSP). Positions 1347 to 1370 (KSLSSAVAKSSPSPSFGPSRSGVG) are enriched in low complexity. Residues 1462 to 1472 (KQTTSTGTPLT) show a composition bias toward polar residues. The span at 1480–1490 (TPDRRQREAEA) shows a compositional bias: basic and acidic residues. Polar residues-rich tracts occupy residues 1617-1629 (TPTH…QSPL) and 1636-1650 (SPQS…NLNS). A compositionally biased stretch (basic residues) spans 1807–1824 (PRRRRTPSRTYSRKKLLD).

It belongs to the treslin family. In terms of assembly, interacts with topbp1 (via BRCT domains); interaction takes place in a cdk2-dependent manner. Component of the replisome complex.

Its subcellular location is the nucleus. In terms of biological role, regulator of DNA replication and S/M and G2/M checkpoints. Regulates the triggering of DNA replication initiation via its interaction with topbp1 by participating in cdk2-mediated loading of cdc45l onto replication origins. Required for the transition from pre-replication complex (pre-RC) to pre-initiation complex (pre-IC). Required to prevent mitotic entry after treatment with ionizing radiation. This is Treslin (ticrr) from Danio rerio (Zebrafish).